The primary structure comprises 313 residues: tRNA dimethylallyltransferase (313 aa).

Residue 11–18 (GPTACGKT) coordinates ATP. 13–18 (TACGKT) contacts substrate. 3 interaction with substrate tRNA regions span residues 36-39 (DSAL), 160-164 (QRIGR), and 243-248 (RCVGYR).

Belongs to the IPP transferase family. In terms of assembly, monomer. The cofactor is Mg(2+).

It catalyses the reaction adenosine(37) in tRNA + dimethylallyl diphosphate = N(6)-dimethylallyladenosine(37) in tRNA + diphosphate. In terms of biological role, catalyzes the transfer of a dimethylallyl group onto the adenine at position 37 in tRNAs that read codons beginning with uridine, leading to the formation of N6-(dimethylallyl)adenosine (i(6)A). The protein is tRNA dimethylallyltransferase of Neisseria gonorrhoeae (strain NCCP11945).